Reading from the N-terminus, the 289-residue chain is ATP synthase gamma chain (289 aa).

Belongs to the ATPase gamma chain family. F-type ATPases have 2 components, CF(1) - the catalytic core - and CF(0) - the membrane proton channel. CF(1) has five subunits: alpha(3), beta(3), gamma(1), delta(1), epsilon(1). CF(0) has three main subunits: a, b and c.

It is found in the cell membrane. Its function is as follows. Produces ATP from ADP in the presence of a proton gradient across the membrane. The gamma chain is believed to be important in regulating ATPase activity and the flow of protons through the CF(0) complex. The chain is ATP synthase gamma chain from Lactococcus lactis subsp. cremoris (strain SK11).